A 186-amino-acid chain; its full sequence is Probable nicotinate-nucleotide adenylyltransferase (186 aa).

Belongs to the NadD family.

The enzyme catalyses nicotinate beta-D-ribonucleotide + ATP + H(+) = deamido-NAD(+) + diphosphate. It participates in cofactor biosynthesis; NAD(+) biosynthesis; deamido-NAD(+) from nicotinate D-ribonucleotide: step 1/1. Its function is as follows. Catalyzes the reversible adenylation of nicotinate mononucleotide (NaMN) to nicotinic acid adenine dinucleotide (NaAD). This Tropheryma whipplei (strain TW08/27) (Whipple's bacillus) protein is Probable nicotinate-nucleotide adenylyltransferase.